Here is a 300-residue protein sequence, read N- to C-terminus: NAD kinase (300 aa).

D75 functions as the Proton acceptor in the catalytic mechanism. Residues 75 to 76, 149 to 150, R177, D179, 190 to 195, A214, and Q248 each bind NAD(+); these read DG, ND, and TAYALS.

Belongs to the NAD kinase family. A divalent metal cation serves as cofactor.

It is found in the cytoplasm. It catalyses the reaction NAD(+) + ATP = ADP + NADP(+) + H(+). Functionally, involved in the regulation of the intracellular balance of NAD and NADP, and is a key enzyme in the biosynthesis of NADP. Catalyzes specifically the phosphorylation on 2'-hydroxyl of the adenosine moiety of NAD to yield NADP. The sequence is that of NAD kinase from Paraburkholderia phytofirmans (strain DSM 17436 / LMG 22146 / PsJN) (Burkholderia phytofirmans).